The primary structure comprises 318 residues: Aspartate carbamoyltransferase catalytic subunit (318 aa).

Residues R54 and T55 each contribute to the carbamoyl phosphate site. Residue K82 participates in L-aspartate binding. Carbamoyl phosphate is bound by residues R104, H134, and Q137. L-aspartate-binding residues include R174 and R230. Carbamoyl phosphate contacts are provided by G271 and P272.

Belongs to the aspartate/ornithine carbamoyltransferase superfamily. ATCase family. In terms of assembly, heterododecamer (2C3:3R2) of six catalytic PyrB chains organized as two trimers (C3), and six regulatory PyrI chains organized as three dimers (R2).

The enzyme catalyses carbamoyl phosphate + L-aspartate = N-carbamoyl-L-aspartate + phosphate + H(+). It functions in the pathway pyrimidine metabolism; UMP biosynthesis via de novo pathway; (S)-dihydroorotate from bicarbonate: step 2/3. In terms of biological role, catalyzes the condensation of carbamoyl phosphate and aspartate to form carbamoyl aspartate and inorganic phosphate, the committed step in the de novo pyrimidine nucleotide biosynthesis pathway. The chain is Aspartate carbamoyltransferase catalytic subunit from Clavibacter michiganensis subsp. michiganensis (strain NCPPB 382).